The chain runs to 361 residues: MTRGLTIALDGMGGDHGPETVIGGADIASVRHPDIRFLIYGDETKIRPFLEKHPRVLSVSEIIHTDVSVSMEDKPSQALRRGRKTSSMWLAIDAVKAGEAQAAVSAGNTGALMAMAKVILRMMPNVERPALAALWPTARGESVMLDLGATVGADGYQLVQFAAMGEAFARVVFNIEQPTVGLLNIGEEEVKGTEGVKLAAQMLREADLPIRFHGFVEGDDIAKGTVDVVVTDGYTGNIALKTAEGMVRLVVDYLRAAMRSSLLSRLGYLLAYGAFRALAKKLDPRASNGAVFLGLNGLVVKSHGGTDAIGFAAAIDVAVDVASADLLSKIVTDLDRLSGLTTSMAGRKQNSDIAESEAVLS.

Belongs to the PlsX family. In terms of assembly, homodimer. Probably interacts with PlsY.

The protein localises to the cytoplasm. The enzyme catalyses a fatty acyl-[ACP] + phosphate = an acyl phosphate + holo-[ACP]. It participates in lipid metabolism; phospholipid metabolism. Functionally, catalyzes the reversible formation of acyl-phosphate (acyl-PO(4)) from acyl-[acyl-carrier-protein] (acyl-ACP). This enzyme utilizes acyl-ACP as fatty acyl donor, but not acyl-CoA. The protein is Phosphate acyltransferase of Parvibaculum lavamentivorans (strain DS-1 / DSM 13023 / NCIMB 13966).